We begin with the raw amino-acid sequence, 596 residues long: Dihydroxy-acid dehydratase pbrD, mitochondrial (596 aa).

A mitochondrion-targeting transit peptide spans 1 to 18 (MATSSIRSRALGLSRRAR). C84 contributes to the [2Fe-2S] cluster binding site. Mg(2+) is bound at residue D116. C157 serves as a coordination point for [2Fe-2S] cluster. D158 contributes to the Mg(2+) binding site. C230 lines the [2Fe-2S] cluster pocket. E483 serves as a coordination point for Mg(2+). The active-site Proton acceptor is the S509.

Belongs to the IlvD/Edd family. The cofactor is [2Fe-2S] cluster. Mg(2+) is required as a cofactor.

The protein resides in the mitochondrion. The enzyme catalyses (2R)-2,3-dihydroxy-3-methylbutanoate = 3-methyl-2-oxobutanoate + H2O. It catalyses the reaction (2R,3R)-2,3-dihydroxy-3-methylpentanoate = (S)-3-methyl-2-oxopentanoate + H2O. It functions in the pathway amino-acid biosynthesis; L-isoleucine biosynthesis; L-isoleucine from 2-oxobutanoate: step 3/4. Its pathway is amino-acid biosynthesis; L-valine biosynthesis; L-valine from pyruvate: step 3/4. DHAD activity is not inhibited by the dihydroxyacid dehydratase inhibitor aspterric acid (AA). Functionally, dihydroxyacid dehydratase; part of the gene cluster that mediates the biosynthesis of the sesquiterpenoid aspterric acid (AA), an inhibitor of dihydroxy-acid dehydratase (DHAD) effective as an herbicide. Performs the third step in the common pathway leading to biosynthesis of branched-chain amino acids. Catalyzes the dehydration of (2R,3R)-2,3-dihydroxy-3-methylpentanoate (2,3-dihydroxy-3-methylvalerate) into 2-oxo-3-methylpentanoate (2-oxo-3-methylvalerate) and of (2R)-2,3-dihydroxy-3-methylbutanoate (2,3-dihydroxyisovalerate) into 2-oxo-3-methylbutanoate (2-oxoisovalerate), the penultimate precursor to L-isoleucine and L-valine, respectively. PbrD confers self-resistance in the presence of the dihydroxyacid dehydratase inhibitor aspterric acid (AA) produced by the ast cluster. This is Dihydroxy-acid dehydratase pbrD, mitochondrial from Penicillium brasilianum.